The sequence spans 345 residues: Mitochondrial substrate carrier family protein J (345 aa).

Topologically, residues Met1 to Tyr31 are mitochondrial intermembrane. Solcar repeat units follow at residues Arg30–Gly118, Asp129–Lys217, and Glu255–Leu342. Residues Tyr32–Ile52 form a helical membrane-spanning segment. The Mitochondrial matrix segment spans residues Arg53–Arg88. Residues Ala89–Gly110 traverse the membrane as a helical segment. At Ser111–Asp129 the chain is on the mitochondrial intermembrane side. The chain crosses the membrane as a helical span at residues Leu130–Val150. Topologically, residues Pro151–Lys191 are mitochondrial matrix. Residues Gly192–Trp208 form a helical membrane-spanning segment. The Mitochondrial intermembrane portion of the chain corresponds to Gly209–Pro257. The helical transmembrane segment at Ile258–Leu278 threads the bilayer. Topologically, residues Asp279 to Lys316 are mitochondrial matrix. A helical membrane pass occupies residues Gly317–Glu337. The Mitochondrial intermembrane portion of the chain corresponds to Glu338–Lys345.

It belongs to the mitochondrial carrier (TC 2.A.29) family.

It localises to the mitochondrion inner membrane. Mitochondrial solute carriers shuttle metabolites, nucleotides, and cofactors through the mitochondrial inner membrane. The sequence is that of Mitochondrial substrate carrier family protein J (mcfJ) from Dictyostelium discoideum (Social amoeba).